A 229-amino-acid chain; its full sequence is Ribonuclease 3 (229 aa).

The region spanning 5–127 (LSRLERQLGY…LIGAIYLDAG (123 aa)) is the RNase III domain. Glu-40 contacts Mg(2+). The active site involves Asp-44. Mg(2+)-binding residues include Asp-113 and Glu-116. Residue Glu-116 is part of the active site. Residues 154–224 (DPKTRLQEFL…AAAALIALGV (71 aa)) form the DRBM domain.

Belongs to the ribonuclease III family. As to quaternary structure, homodimer. The cofactor is Mg(2+).

It is found in the cytoplasm. The catalysed reaction is Endonucleolytic cleavage to 5'-phosphomonoester.. Its function is as follows. Digests double-stranded RNA. Involved in the processing of primary rRNA transcript to yield the immediate precursors to the large and small rRNAs (23S and 16S). Processes some mRNAs, and tRNAs when they are encoded in the rRNA operon. Processes pre-crRNA and tracrRNA of type II CRISPR loci if present in the organism. This chain is Ribonuclease 3, found in Pseudomonas syringae pv. syringae (strain B728a).